The sequence spans 841 residues: Beta-adaptin-like protein A (841 aa).

Disordered regions lie at residues 1-25 and 650-671; these read MAPP…VSDL and DENK…LESS. 2 stretches are compositionally biased toward polar residues: residues 9–25 and 654–671; these read RYPS…VSDL and GVSN…LESS.

It belongs to the adaptor complexes large subunit family. Adaptor protein complexes are heterotetramers composed of two large adaptins (beta-type subunit and alpha-type or delta-type or epsilon-type or gamma-type subunit), a medium adaptin (mu-type subunit) and a small adaptin (sigma-type subunit). Interacts with AHK2.

It localises to the golgi apparatus. Its subcellular location is the trans-Golgi network. The protein localises to the cytoplasmic vesicle. The protein resides in the clathrin-coated vesicle membrane. Functionally, subunit of clathrin-associated adaptor protein complex that plays a role in protein sorting in the late-Golgi/trans-Golgi network (TGN) and/or endosomes. The AP complexes mediate both the recruitment of clathrin to membranes and the recognition of sorting signals within the cytosolic tails of transmembrane cargo molecules. The sequence is that of Beta-adaptin-like protein A (BETAA-AD) from Arabidopsis thaliana (Mouse-ear cress).